The sequence spans 500 residues: Cytochrome P450 71B35 (500 aa).

Residues 1 to 21 (MAHIWLLPLIFLVCILLAVFN) traverse the membrane as a helical segment. Cys-439 contacts heme.

The protein belongs to the cytochrome P450 family. The cofactor is heme.

Its subcellular location is the membrane. This chain is Cytochrome P450 71B35 (CYP71B35), found in Arabidopsis thaliana (Mouse-ear cress).